Here is a 214-residue protein sequence, read N- to C-terminus: MISSLRGTVLSVSGQTLLLEVHGVGYGVSVTPRHALELRHGSEATVLTSLVVREDSLTLFGFPGPDELRAFELLCGVTGVGPKSALAVLEHLDPEAMAQAVAAEDDAAFRRVSGIGPKTAKLIVLQLAGKLFVTQPRTRSASSAASTVTADVVTALIGLGWSERVARTAVDDAAAAAAEQGLPADMPRLLRVALGMLGPQQPAGAPAAAQAADR.

Residues 1-63 (MISSLRGTVL…EDSLTLFGFP (63 aa)) are domain I. The tract at residues 64 to 139 (GPDELRAFEL…KLFVTQPRTR (76 aa)) is domain II. Residues 139–143 (RSASS) form a flexible linker region. The tract at residues 144–214 (AASTVTADVV…APAAAQAADR (71 aa)) is domain III.

This sequence belongs to the RuvA family. Homotetramer. Forms an RuvA(8)-RuvB(12)-Holliday junction (HJ) complex. HJ DNA is sandwiched between 2 RuvA tetramers; dsDNA enters through RuvA and exits via RuvB. An RuvB hexamer assembles on each DNA strand where it exits the tetramer. Each RuvB hexamer is contacted by two RuvA subunits (via domain III) on 2 adjacent RuvB subunits; this complex drives branch migration. In the full resolvosome a probable DNA-RuvA(4)-RuvB(12)-RuvC(2) complex forms which resolves the HJ.

It is found in the cytoplasm. In terms of biological role, the RuvA-RuvB-RuvC complex processes Holliday junction (HJ) DNA during genetic recombination and DNA repair, while the RuvA-RuvB complex plays an important role in the rescue of blocked DNA replication forks via replication fork reversal (RFR). RuvA specifically binds to HJ cruciform DNA, conferring on it an open structure. The RuvB hexamer acts as an ATP-dependent pump, pulling dsDNA into and through the RuvAB complex. HJ branch migration allows RuvC to scan DNA until it finds its consensus sequence, where it cleaves and resolves the cruciform DNA. The chain is Holliday junction branch migration complex subunit RuvA from Clavibacter sepedonicus (Clavibacter michiganensis subsp. sepedonicus).